A 384-amino-acid polypeptide reads, in one-letter code: Glycine-rich cell wall structural protein 1 (384 aa).

The first 27 residues, 1-27 (MGSSQKWVIGLLLFSSIFFELTAITLA), serve as a signal peptide directing secretion.

It localises to the secreted. It is found in the cell wall. In terms of biological role, responsible for plasticity of the cell wall. This is Glycine-rich cell wall structural protein 1 (GRP-1) from Petunia hybrida (Petunia).